Consider the following 2315-residue polypeptide: Receptor-type tyrosine-protein phosphatase zeta (2315 aa).

Positions 1–24 (MRILKRFLACIQLLCVCRLDWANG) are cleaved as a signal peptide. The Extracellular portion of the chain corresponds to 25-1636 (YYRQQRKLVE…LAEGLESEKK (1612 aa)). In terms of domain architecture, Alpha-carbonic anhydrase spans 36-300 (IGWSYTGALN…KFSRQVFSSY (265 aa)). 2 cysteine pairs are disulfide-bonded: Cys56/Cys240 and Cys133/Cys264. Asn105, Asn134, Asn223, Asn232, Asn324, and Asn381 each carry an N-linked (GlcNAc...) asparagine glycan. The region spanning 314-413 (EPENVQADPE…LIVDMPTDNP (100 aa)) is the Fibronectin type-III domain. 2 disordered regions span residues 442–462 (IVNP…PQIS) and 477–507 (AKTN…SQPV). A compositionally biased stretch (polar residues) spans 496–507 (PNTSLNSTSQPV). N-linked (GlcNAc...) asparagine glycosylation is found at Asn497, Asn501, and Asn552. Ser587 carries O-linked (Xyl...) (chondroitin sulfate) serine glycosylation. 2 N-linked (GlcNAc...) asparagine glycosylation sites follow: Asn602 and Asn629. Residues 628–650 (RNASEDSTSSGSEESLKDPSMEG) form a disordered region. Position 637 is a phosphoserine; alternate (Ser637). An O-linked (Xyl...) (chondroitin sulfate) serine; alternate glycan is attached at Ser637. Phosphoserine is present on Ser639. N-linked (GlcNAc...) asparagine glycosylation occurs at Asn677. A glycan (O-linked (Xyl...) (chondroitin sulfate) serine) is linked at Ser997. N-linked (GlcNAc...) asparagine glycans are attached at residues Asn1017, Asn1050, Asn1082, and Asn1122. Polar residues predominate over residues 1123 to 1138 (FSVQPTHTVSQASGDT). Disordered regions lie at residues 1123–1160 (FSVQ…SSEM), 1397–1523 (KATS…EEND), 1543–1572 (LTSD…SFAD), and 1584–1621 (AGDS…NSSH). Low complexity predominate over residues 1145 to 1159 (SANSEPASSDPASSE). The span at 1417–1432 (EDGDTDDDGDDDDDDR) shows a compositional bias: acidic residues. Over residues 1450-1465 (ESQEKVMNDSDTHENS) the composition is skewed to basic and acidic residues. The N-linked (GlcNAc...) asparagine glycan is linked to Asn1457. 2 stretches are compositionally biased toward polar residues: residues 1466–1479 (LMDQ…SLSE) and 1487–1513 (VTSV…GLSQ). O-linked (Xyl...) (chondroitin sulfate) serine glycans are attached at residues Ser1549 and Ser1551. 2 stretches are compositionally biased toward polar residues: residues 1554 to 1572 (GTSD…SFAD) and 1593 to 1606 (FPQS…SENS). Asn1562 is a glycosylation site (N-linked (GlcNAc...) asparagine). Asn1618 carries N-linked (GlcNAc...) asparagine glycosylation. The chain crosses the membrane as a helical span at residues 1637–1662 (AVIPLVIVSALTFICLVVLVGILIYW). At 1663–2315 (RKCFQTAHFY…NIAESLESLV (653 aa)) the chain is on the cytoplasmic side. Phosphothreonine occurs at positions 1684 and 1687. Tyrosine-protein phosphatase domains lie at 1717-1992 (FTEE…LVEA) and 2023-2282 (LEKQ…ILSL). Substrate-binding positions include Asp1901, 1933–1939 (CSAGVGR), and Gln1977. The active-site Phosphocysteine intermediate is the Cys1933. Position 2055 is a phosphoserine (Ser2055).

The protein belongs to the protein-tyrosine phosphatase family. Receptor class 5 subfamily. The carbonic-anhydrase like domain interacts with CNTN1 (contactin). Interacts with PTN. Interaction with PTN promotes formation of homooligomers; oligomerization impairs phosphatase activity. Interacts (via chondroitin sulfate chains) with MDK (via C-terminal); this interaction is inhibited by PTN; this interaction promotes neuronal migration. In terms of tissue distribution, specifically expressed in the central nervous system, where it is localized in the Purkinje cell layer of the cerebellum, the dentate gyrus, and the subependymal layer of the anterior horn of the lateral ventricle. Developmentally regulated in the brain.

It is found in the cell membrane. Its subcellular location is the secreted. It catalyses the reaction O-phospho-L-tyrosyl-[protein] + H2O = L-tyrosyl-[protein] + phosphate. Its function is as follows. Protein tyrosine phosphatase that negatively regulates oligodendrocyte precursor proliferation in the embryonic spinal cord. Required for normal differentiation of the precursor cells into mature, fully myelinating oligodendrocytes. May play a role in protecting oligondendrocytes against apoptosis. May play a role in the establishment of contextual memory, probably via the dephosphorylation of proteins that are part of important signaling cascades. This chain is Receptor-type tyrosine-protein phosphatase zeta (PTPRZ1), found in Homo sapiens (Human).